The chain runs to 185 residues: dTTP/UTP pyrophosphatase (185 aa).

D64 (proton acceptor) is an active-site residue.

This sequence belongs to the Maf family. YhdE subfamily. Requires a divalent metal cation as cofactor.

It is found in the cytoplasm. It catalyses the reaction dTTP + H2O = dTMP + diphosphate + H(+). The catalysed reaction is UTP + H2O = UMP + diphosphate + H(+). Functionally, nucleoside triphosphate pyrophosphatase that hydrolyzes dTTP and UTP. May have a dual role in cell division arrest and in preventing the incorporation of modified nucleotides into cellular nucleic acids. This is dTTP/UTP pyrophosphatase from Leptospira borgpetersenii serovar Hardjo-bovis (strain JB197).